Here is a 167-residue protein sequence, read N- to C-terminus: Translationally-controlled tumor protein homolog (167 aa).

Residues 1–167 (MIIFTDVISG…WKHGVSEDKI (167 aa)) form the TCTP domain.

Belongs to the TCTP family.

It localises to the cytoplasm. The protein localises to the cytoskeleton. Functionally, involved in protein synthesis. Involved in microtubule stabilization. The chain is Translationally-controlled tumor protein homolog from Debaryomyces hansenii (strain ATCC 36239 / CBS 767 / BCRC 21394 / JCM 1990 / NBRC 0083 / IGC 2968) (Yeast).